A 216-amino-acid chain; its full sequence is 2',3'-cyclic-nucleotide 3'-phosphodiesterase (216 aa).

His39 serves as the catalytic Proton donor/acceptor. Residue Thr41 coordinates substrate. His153 serves as the catalytic Proton donor/acceptor. Substrate is bound by residues Ser155 and Tyr158.

Belongs to the 2H phosphoesterase superfamily. CPD1 family.

The protein localises to the golgi apparatus. It catalyses the reaction a nucleoside 2',3'-cyclic phosphate + H2O = a nucleoside 2'-phosphate + H(+). Involved in the metabolism of ADP-ribose 1',2'-cyclic phosphate which is produced as a consequence of tRNA splicing. This is 2',3'-cyclic-nucleotide 3'-phosphodiesterase (CPD1) from Yarrowia lipolytica (strain CLIB 122 / E 150) (Yeast).